The sequence spans 195 residues: Cysteine/O-acetylserine efflux protein (195 aa).

5 helical membrane passes run 47–67 (SLGF…LAVI), 70–90 (AAVH…AWKI), 105–125 (ISFW…LYGV), 142–162 (VVGV…CWAL), and 177–194 (QLNI…VRIF).

It belongs to the Rht family.

Its subcellular location is the cell inner membrane. It carries out the reaction O-acetyl-L-serine(in) = O-acetyl-L-serine(out). The catalysed reaction is L-cysteine(in) = L-cysteine(out). In terms of biological role, exporter of O-acetylserine (OAS) and cysteine. In Shigella boydii serotype 4 (strain Sb227), this protein is Cysteine/O-acetylserine efflux protein (eamB).